The following is a 185-amino-acid chain: Transcription termination/antitermination protein NusG (185 aa).

A KOW domain is found at 134 to 162 (PGQMVRVIDGPFNDFDGLVEEVNYEKNRL).

It belongs to the NusG family.

In terms of biological role, participates in transcription elongation, termination and antitermination. In Xylella fastidiosa (strain Temecula1 / ATCC 700964), this protein is Transcription termination/antitermination protein NusG.